A 674-amino-acid chain; its full sequence is MVVVGKSEVRNVSMSRPKKKSLIAILSTCVLFFLVFIIGAKFQYVSVFSKFLDDRGDNESLQLLNDIEFTRLGLTPREPVIIKDVKTGKERKLHGRFLHITDIHPDPYYVEGSSIDAVCHTGKPSKKKDVAPKFGKAMSGCDSPVILMEETLRWIKENLRDKIDFVIWTGDNIRHDNDRKHPRTEAQIFDMNNIVADKMTELFSAGNEEDPRDFDVSVIPSLGNNDVFPHNMFALGPTLQTREYYRIWKNFVPQQQQRTFDRSASFLTEVIPGKLAVLSINTLYLFKANPLVDNCNSKKEPGYQLLLWFGYVLEELRSRGMKVWLSGHVPPIAKNFDQSCYDKFTLWTHEYRDIIIGGLYGHMNIDHFIPTDGKKARKSLLKAMEQSTRVQQGEDSNEEDEETELNRILDHAMAAKEVFLMGAKPSNKEAYMNTVRDTYYRKVWNKLERVDEKNVENEKKKKEKKDKKKKKPITRKELIERYSIVNIGGSVIPTFNPSFRIWEYNITDIVNDSNFAVSEYKPWDEFFESLNKIMEDSLLEDEMDSSNIEVGINREKMGEKKNKKKKKNDKTMPIEMPDKYELGPAYVPQLFTPTRFVQFYADLEKINQELHNSFVESKDIFRYEIEYTSDEKPYSMDSLTVGSYLDLAGRLYENKPAWEKYVEWSFASSGYKDD.

Residues 1 to 21 (MVVVGKSEVRNVSMSRPKKKS) are Cytoplasmic-facing. 2 consecutive propeptides (removed in mature form) follow at residues 1–83 (MVVV…VIIK) and 385–674 (EQST…YKDD). Lys6 is covalently cross-linked (Glycyl lysine isopeptide (Lys-Gly) (interchain with G-Cter in ubiquitin)). The helical; Signal-anchor for type II membrane protein transmembrane segment at 22 to 42 (LIAILSTCVLFFLVFIIGAKF) threads the bilayer. The Vacuolar portion of the chain corresponds to 43-674 (QYVSVFSKFL…SFASSGYKDD (632 aa)). A glycan (N-linked (GlcNAc...) asparagine) is linked at Asn58. The disordered stretch occupies residues 384 to 403 (MEQSTRVQQGEDSNEEDEET). Asn505 and Asn511 each carry an N-linked (GlcNAc...) asparagine glycan.

This sequence belongs to the endopolyphosphatase PPN1 family. Homotetramer. Interacts with PPN2. Mn(2+) is required as a cofactor. Mg(2+) serves as cofactor. Requires Co(2+) as cofactor. It depends on Zn(2+) as a cofactor. Post-translationally, processing by proteases in the vacuole is required for activation. In terms of processing, ubiquitinated. Ubiquitination mediates sorting into internal vesicles in late endosomes. TUL1 and RSP5 are required for ubiquitination. Other cytoplasmic Lys residues than Lys-6 may also be ubiquitinated. N-glycosylated. N-glycosylation is essential for the protease-mediated maturation.

The protein localises to the vacuole membrane. It localises to the cytoplasm. The enzyme catalyses [phosphate](n+1) + n H2O = (n+1) phosphate + n H(+). It carries out the reaction [phosphate](n) + H2O = [phosphate](n-1) + phosphate + H(+). It catalyses the reaction dATP + H2O = dADP + phosphate + H(+). Inhibited by heparin and EDTA. Functionally, catalyzes the hydrolysis of inorganic polyphosphate (polyP) chains of many hundreds of phosphate residues into shorter lengths. Has both exopolyphosphatase and endopolyphosphatase activities at different ratios depending on divalent cations by cleaving phosphate from the chain end and by fragmenting long-chain polymers into shorter ones, respectively. The limited digestion products are 1 and 3 P(i) residues. Also releases phosphate from dATP. dATP phosphohydrolase activity is about 7-fold lower than the exopolyphosphatase activity. This Saccharomyces cerevisiae (strain ATCC 204508 / S288c) (Baker's yeast) protein is Endopolyphosphatase.